We begin with the raw amino-acid sequence, 135 residues long: Large ribosomal subunit protein bL21 (135 aa).

Positions glutamate 114–glutamate 135 are disordered. Residues threonine 125–glutamate 135 show a composition bias toward acidic residues.

Belongs to the bacterial ribosomal protein bL21 family. Part of the 50S ribosomal subunit. Contacts protein L20.

Its function is as follows. This protein binds to 23S rRNA in the presence of protein L20. The polypeptide is Large ribosomal subunit protein bL21 (Nostoc punctiforme (strain ATCC 29133 / PCC 73102)).